Here is a 396-residue protein sequence, read N- to C-terminus: Purine ribonucleoside efflux pump NepI (396 aa).

The Cytoplasmic segment spans residues 1 to 21 (MSEFIAENRGADAITRPNWSA). The helical transmembrane segment at 22–42 (VFSVAFCVACLIIVEFLPVSL) threads the bilayer. At 43-54 (LTPMAQDLGISE) the chain is on the periplasmic side. A helical transmembrane segment spans residues 55–75 (GVAGQSVTVTAFVAMFASLFI). Residues 76–85 (TQTIQATDRC) lie on the Cytoplasmic side of the membrane. A helical membrane pass occupies residues 86–106 (YVVILFAVLLTLSCLLVSFAN). Position 107 (serine 107) is a topological domain, periplasmic. A helical transmembrane segment spans residues 108–128 (FSLLLIGRACLGLALGGFWAM). At 129–147 (SASLTMRLVPPRTVPKALS) the chain is on the cytoplasmic side. The helical transmembrane segment at 148–168 (VIFGAVSIALVIAAPLGSFLG) threads the bilayer. Residues 169-175 (ELIGWRN) are Periplasmic-facing. The helical transmembrane segment at 176–196 (VFNAAAVMGVLCIFWIIKSLP) threads the bilayer. At 197-215 (SLPGEPSHQKQNTFRLLQR) the chain is on the cytoplasmic side. A helical transmembrane segment spans residues 216 to 236 (PGVMAGMIAIFMSFAGQFAFF). At 237–255 (TYIRPVYMNLAGFGVDGLT) the chain is on the periplasmic side. The chain crosses the membrane as a helical span at residues 256-276 (LVLLSFGIASFIGTSLSSFIL). Over 277–281 (KRSVK) the chain is Cytoplasmic. A helical transmembrane segment spans residues 282-302 (LALAGAPLILAVSALVLTLWG). The Periplasmic portion of the chain corresponds to 303 to 305 (SDK). Residues 306 to 326 (IVATGVAIIWGLTFALVPVGW) form a helical membrane-spanning segment. Over 327-343 (STWITRSLADQAEKAGS) the chain is Cytoplasmic. Residues 344-364 (IQVAVIQLANTCGAAIGGYAL) form a helical membrane-spanning segment. Topologically, residues 365–366 (DN) are periplasmic. The helical transmembrane segment at 367–387 (IGLTSPLMLSGTLMLLTALLV) threads the bilayer. The Cytoplasmic segment spans residues 388-396 (TAKVKMKKS).

The protein belongs to the major facilitator superfamily. DHA1 family. NepI (TC 2.A.1.2.26) subfamily.

It is found in the cell inner membrane. The catalysed reaction is inosine(in) + H(+)(out) = inosine(out) + H(+)(in). It carries out the reaction guanosine(in) + H(+)(out) = guanosine(out) + H(+)(in). Involved in the efflux of purine ribonucleosides, such as inosine and guanosine. This chain is Purine ribonucleoside efflux pump NepI, found in Shigella boydii serotype 4 (strain Sb227).